A 162-amino-acid chain; its full sequence is Auracyanin-A (162 aa).

Residues 1–22 form the signal peptide; the sequence is MKITLRMMVLAVLTAMAMVLAA. Cysteine 23 carries N-palmitoyl cysteine lipidation. Cysteine 23 carries S-diacylglycerol cysteine lipidation. Residues 42–162 form the Plastocyanin-like domain; that stretch reads VTIEIGSKGE…PLMQGKLVVN (121 aa). Positions 81, 146, 151, and 155 each coordinate Cu cation.

In terms of assembly, monomer. It depends on Cu cation as a cofactor.

The protein localises to the cell membrane. Functionally, probably a soluble electron acceptor for the integral membrane protein electron transfer alternative complex III (ACIII). In Chloroflexus aurantiacus (strain ATCC 29366 / DSM 635 / J-10-fl), this protein is Auracyanin-A.